The chain runs to 113 residues: Large ribosomal subunit protein uL22 (113 aa).

The protein belongs to the universal ribosomal protein uL22 family. In terms of assembly, part of the 50S ribosomal subunit.

This protein binds specifically to 23S rRNA; its binding is stimulated by other ribosomal proteins, e.g. L4, L17, and L20. It is important during the early stages of 50S assembly. It makes multiple contacts with different domains of the 23S rRNA in the assembled 50S subunit and ribosome. Functionally, the globular domain of the protein is located near the polypeptide exit tunnel on the outside of the subunit, while an extended beta-hairpin is found that lines the wall of the exit tunnel in the center of the 70S ribosome. This is Large ribosomal subunit protein uL22 from Bacillus cytotoxicus (strain DSM 22905 / CIP 110041 / 391-98 / NVH 391-98).